The chain runs to 133 residues: MAKEFGRPQRVAQEMQKEIALILQREIKDPRLGMMTTVSGVEMSRDLAYAKVYVTFLNDKDEDAVKAGIKALQEASGFIRSLLGKAMRLRIVPELTFFYDNSLVEGMRMSNLVTSVVKHDEERRVNPDDSKEG.

This sequence belongs to the RbfA family. Monomer. Binds 30S ribosomal subunits, but not 50S ribosomal subunits or 70S ribosomes.

It is found in the cytoplasm. One of several proteins that assist in the late maturation steps of the functional core of the 30S ribosomal subunit. Associates with free 30S ribosomal subunits (but not with 30S subunits that are part of 70S ribosomes or polysomes). Required for efficient processing of 16S rRNA. May interact with the 5'-terminal helix region of 16S rRNA. The sequence is that of Ribosome-binding factor A from Escherichia coli O127:H6 (strain E2348/69 / EPEC).